We begin with the raw amino-acid sequence, 1463 residues long: Secretory phospholipase A2 receptor (1463 aa).

The signal sequence occupies residues 1–20 (MPLLSLSLLLLLLQVPAGSA). Over 21–1392 (ETAAWAVTPE…IHTVKKHPGK (1372 aa)) the chain is Extracellular. In terms of domain architecture, Ricin B-type lectin spans 38 to 115 (KGIFIIQSEN…CDSTHVSLKW (78 aa)). A glycan (N-linked (GlcNAc...) asparagine) is linked at Asn-93. The Fibronectin type-II domain occupies 173–221 (AHGTPCMFPFQYNQQWHHECTREGREDNLLWCATTSRYERDEKWGFCPD). 16 disulfides stabilise this stretch: Cys-178–Cys-204, Cys-192–Cys-219, Cys-260–Cys-354, Cys-330–Cys-346, Cys-406–Cys-501, Cys-478–Cys-493, Cys-617–Cys-634, Cys-699–Cys-796, Cys-774–Cys-788, Cys-840–Cys-938, Cys-915–Cys-930, Cys-992–Cys-1096, Cys-1068–Cys-1088, Cys-1209–Cys-1223, Cys-1280–Cys-1377, and Cys-1354–Cys-1369. 8 consecutive C-type lectin domains span residues 229–353 (CDAV…LPYV), 357–500 (YLNP…LFYL), 504–641 (TGLV…KAMS), 646–795 (PVEN…REWI), 799–937 (PRDV…MPSI), 941–1095 (KKVW…YGFV), 1099–1230 (MQDA…LQGA), and 1235–1376 (PTET…KGFI). N-linked (GlcNAc...) asparagine glycosylation is present at Asn-454. Asn-1057 carries an N-linked (GlcNAc...) asparagine glycan. The chain crosses the membrane as a helical span at residues 1393-1421 (GPSHSVIPLTVALTLLVILAISTLSFCMY). The Cytoplasmic portion of the chain corresponds to 1422–1463 (KHSHIIFGRLAQFRNPYYPSANFSTVHLEENILISDLEKNDQ). The Endocytosis signal motif lies at 1436-1442 (NPYYPSA).

As to quaternary structure, interacts with sPLA2-IB/PLA2G1B; this interaction mediates intracellular signaling as well as clearance of extracellular sPLA2-IB/PLA2G1B via endocytotic pathway. Interacts with sPLA2-X/PLA2G10; this interaction mediates sPLA2-X/PLA2G10 clearance and inactivation. The secretory phospholipase A2 receptor form may be produced by the action of metalloproteinases. It contains all extracellular domains and only lacks transmembrane and cytosolic regions. It is however unclear whether this form is produced by proteolytic cleavage as suggested by some experiments, or by alternative splicing.

Its subcellular location is the cell membrane. The protein resides in the secreted. Its function is as follows. Receptor for secretory phospholipase A2 (sPLA2). Also able to bind to snake PA2-like toxins. Although its precise function remains unclear, binding of sPLA2 to its receptor participates in both positive and negative regulation of sPLA2 functions as well as clearance of sPLA2. Binding of sPLA2-IB/PLA2G1B induces various effects depending on the cell type, such as activation of the mitogen-activated protein kinase (MAPK) cascade to induce cell proliferation, the production of lipid mediators, selective release of arachidonic acid in bone marrow-derived mast cells. In neutrophils, binding of sPLA2-IB/PLA2G1B can activate p38 MAPK to stimulate elastase release and cell adhesion. May be involved in responses in pro-inflammatory cytokine productions during endotoxic shock. Also has endocytic properties and rapidly internalizes sPLA2 ligands, which is particularly important for the clearance of extracellular sPLA2s to protect their potent enzymatic activities. The soluble secretory phospholipase A2 receptor form is circulating and acts as a negative regulator of sPLA2 functions by blocking the biological functions of sPLA2-IB/PLA2G1B and sPLA2-X/PLA2G10. This chain is Secretory phospholipase A2 receptor (PLA2R1), found in Bos taurus (Bovine).